The chain runs to 244 residues: Agamous-like MADS-box protein MADS3 (244 aa).

The MADS-box domain occupies 1 to 61 (MGRGRVELKR…GKLYEFGSAG (61 aa)). A K-box domain is found at 85 to 175 (TQSWYQEVSK…KLKLEAEGQS (91 aa)). The tract at residues 180–206 (QGSWNPSTATAGNSSFPVHPSQSNPMD) is disordered. Positions 181–204 (GSWNPSTATAGNSSFPVHPSQSNP) are enriched in polar residues.

In terms of tissue distribution, expressed in flowers and seeds.

The protein localises to the nucleus. Functionally, probable transcription factor involved in flower development. This chain is Agamous-like MADS-box protein MADS3, found in Vitis vinifera (Grape).